A 131-amino-acid chain; its full sequence is Holo-[acyl-carrier-protein] synthase (131 aa).

Residues Asp9 and Glu58 each coordinate Mg(2+).

It belongs to the P-Pant transferase superfamily. AcpS family. Mg(2+) serves as cofactor.

Its subcellular location is the cytoplasm. It catalyses the reaction apo-[ACP] + CoA = holo-[ACP] + adenosine 3',5'-bisphosphate + H(+). In terms of biological role, transfers the 4'-phosphopantetheine moiety from coenzyme A to a Ser of acyl-carrier-protein. In Salmonella arizonae (strain ATCC BAA-731 / CDC346-86 / RSK2980), this protein is Holo-[acyl-carrier-protein] synthase.